Reading from the N-terminus, the 729-residue chain is Polyribonucleotide nucleotidyltransferase (729 aa).

The Mg(2+) site is built by Asp-485 and Asp-491. The KH domain occupies 552-611 (PRITTMKVAEDKIRTIIGKGGATIKGLIESTGVSIDIDDSGVIQLFSPDKMALEEAQKQI). Residues 621-689 (GQTYQGKVSK…KQGRVKLEWK (69 aa)) enclose the S1 motif domain.

The protein belongs to the polyribonucleotide nucleotidyltransferase family. Component of the RNA degradosome, which is a multiprotein complex involved in RNA processing and mRNA degradation. Mg(2+) serves as cofactor.

Its subcellular location is the cytoplasm. The enzyme catalyses RNA(n+1) + phosphate = RNA(n) + a ribonucleoside 5'-diphosphate. Involved in mRNA degradation. Catalyzes the phosphorolysis of single-stranded polyribonucleotides processively in the 3'- to 5'-direction. This chain is Polyribonucleotide nucleotidyltransferase, found in Legionella pneumophila (strain Corby).